We begin with the raw amino-acid sequence, 318 residues long: ADP-ribosyl cyclase/cyclic ADP-ribose hydrolase 2 (318 aa).

The signal sequence occupies residues 1–32 (MAAQGCAASRLLQLLLQLLLLLLLLAAGGARA). Cystine bridges form between Cys51–Cys67, Cys83–Cys163, and Cys144–Cys157. N-linked (GlcNAc...) asparagine glycans are attached at residues Asn66 and Asn95. Position 109 (Trp109) interacts with NAD(+). Residue Trp109 coordinates nicotinamide. Asn148 is a glycosylation site (N-linked (GlcNAc...) asparagine). An NAD(+)-binding site is contributed by Trp172. Residue Asn192 is glycosylated (N-linked (GlcNAc...) asparagine). Glu210 is an NAD(+) binding site. 2 disulfides stabilise this stretch: Cys238/Cys259 and Cys271/Cys280. Ala293 carries the GPI-anchor amidated alanine lipid modification. The propeptide at 294-318 (PSLYTEQRAGLIIPLFLVLASRTQL) is removed in mature form.

Belongs to the ADP-ribosyl cyclase family. Homodimer. In terms of tissue distribution, expressed in various tissues including placenta, lung, liver and kidney.

The protein resides in the cell membrane. The catalysed reaction is NAD(+) + H2O = ADP-D-ribose + nicotinamide + H(+). It catalyses the reaction NAD(+) = cyclic ADP-beta-D-ribose + nicotinamide + H(+). It carries out the reaction cyclic ADP-beta-D-ribose + H2O = ADP-D-ribose. ADP-ribosyl cyclase and cADPR hydrolase activities are both activated by Zn(2+) or Mn(2+), and inhibited by Cu(2+), while Mg(2+) and Ca(2+) do not have any significant influence. In terms of biological role, catalyzes both the synthesis of cyclic ADP-beta-D-ribose (cADPR) from NAD(+), and its hydrolysis to ADP-D-ribose (ADPR). Cyclic ADPR is known to serve as an endogenous second messenger that elicits calcium release from intracellular stores, and thus regulates the mobilization of intracellular calcium. May be involved in pre-B-cell growth. The polypeptide is ADP-ribosyl cyclase/cyclic ADP-ribose hydrolase 2 (BST1) (Homo sapiens (Human)).